Consider the following 446-residue polypeptide: Mycosin-1 (446 aa).

Positions 1–21 (MHRIFLITVALALLTASPASA) are cleaved as a signal peptide. Residues 24–43 (PPPIDPGALPPDVTGPDQPT) form a disordered region. Residues 64-387 (PWSNTYLGVA…AGVIDAVAAL (324 aa)) form the Peptidase S8 domain. Active-site charge relay system residues include Asp90, His121, and Ser332. Residues 419–439 (ITAVALVAVGLTLALGLGALA) form a helical membrane-spanning segment.

Belongs to the peptidase S8 family.

It is found in the cell membrane. Functionally, may play a dual role in regulation of ESX-1 secretion and virulence. Acts as a protease that cleaves EspB. Essential for ESX-1 function, required for early replication in macrophages and full virulence in mice. In Mycobacterium tuberculosis (strain ATCC 25618 / H37Rv), this protein is Mycosin-1.